Consider the following 274-residue polypeptide: Diaminopimelate epimerase (274 aa).

Asn11, Gln44, and Asn64 together coordinate substrate. The active-site Proton donor is Cys73. Residues 74-75, Asn157, Asn190, and 208-209 each bind substrate; these read GN and ER. The active-site Proton acceptor is the Cys217. Residue 218-219 coordinates substrate; the sequence is GS.

This sequence belongs to the diaminopimelate epimerase family. As to quaternary structure, homodimer.

It localises to the cytoplasm. The catalysed reaction is (2S,6S)-2,6-diaminopimelate = meso-2,6-diaminopimelate. The protein operates within amino-acid biosynthesis; L-lysine biosynthesis via DAP pathway; DL-2,6-diaminopimelate from LL-2,6-diaminopimelate: step 1/1. Functionally, catalyzes the stereoinversion of LL-2,6-diaminopimelate (L,L-DAP) to meso-diaminopimelate (meso-DAP), a precursor of L-lysine and an essential component of the bacterial peptidoglycan. In Pectobacterium carotovorum subsp. carotovorum (strain PC1), this protein is Diaminopimelate epimerase.